A 1883-amino-acid chain; its full sequence is Zinc finger protein 106 (1883 aa).

Residues Ile-6 and Lys-37 each participate in a glycyl lysine isopeptide (Lys-Gly) (interchain with G-Cter in SUMO2) cross-link. Residues 20–44 (HECRVCGVTEVGLSAYAKHISGQLH) form a C2H2-type 1; atypical zinc finger. The interval 39–162 (ISGQLHKDNV…NGGGPRGRSG (124 aa)) is disordered. A compositionally biased stretch (acidic residues) spans 52–67 (EREDDGKGEEEEEDYF). Residues Lys-69 and Lys-76 each participate in a glycyl lysine isopeptide (Lys-Gly) (interchain with G-Cter in SUMO2) cross-link. Basic and acidic residues-rich tracts occupy residues 77-86 (QRKEQSRQDE), 96-116 (SDDR…DRES), and 128-138 (PQRDWKWEKDG). A Glycyl lysine isopeptide (Lys-Gly) (interchain with G-Cter in SUMO2) cross-link involves residue Lys-133. A compositionally biased stretch (polar residues) spans 139 to 148 (FNNTRKNSFP). Residues Lys-243, Lys-287, and Lys-305 each participate in a glycyl lysine isopeptide (Lys-Gly) (interchain with G-Cter in SUMO2) cross-link. A compositionally biased stretch (polar residues) spans 322 to 338 (QTTKQADTATSKVSGKN). A disordered region spans residues 322-356 (QTTKQADTATSKVSGKNGSAAREKPRRWTPYPSQK). Glycyl lysine isopeptide (Lys-Gly) (interchain with G-Cter in SUMO2) cross-links involve residues Lys-356, Lys-365, Lys-371, and Lys-417. Residues 389–423 (IQEPQTDETRNSPTQKTQKEIHTGSLNHKASSDSA) form a disordered region. Residues 412-423 (GSLNHKASSDSA) show a composition bias toward polar residues. A Phosphoserine modification is found at Ser-422. Glycyl lysine isopeptide (Lys-Gly) (interchain with G-Cter in SUMO2) cross-links involve residues Lys-451, Lys-461, Lys-477, Lys-492, Lys-505, Lys-515, Lys-525, Lys-539, and Lys-557. Residues 457 to 501 (CPATKSLSQKQDPKNISKNTKTNFFSPGEHSNPSNKPTVEDNHGP) form a disordered region. A compositionally biased stretch (polar residues) spans 461–493 (KSLSQKQDPKNISKNTKTNFFSPGEHSNPSNKP). Residues 586–637 (LEDESDGETSDTEKHGTKIGTLGSATTELLSGSTRTADEKEEDDRILKTSRE) are disordered. At Ser-590 the chain carries Phosphoserine. Lys-603 participates in a covalent cross-link: Glycyl lysine isopeptide (Lys-Gly) (interchain with G-Cter in SUMO2). Residues 608–620 (GSATTELLSGSTR) show a composition bias toward polar residues. Phosphoserine occurs at positions 641 and 661. Residues Lys-671, Lys-684, Lys-705, Lys-721, Lys-741, Lys-775, and Lys-807 each participate in a glycyl lysine isopeptide (Lys-Gly) (interchain with G-Cter in SUMO2) cross-link. Phosphoserine occurs at positions 859, 861, 864, and 893. Residues 879 to 945 (EEGTGKENEP…HSAQLSSDHI (67 aa)) form a disordered region. Over residues 888–906 (PQQMVSPSNSLRAGQSQKA) the composition is skewed to polar residues. Residues Lys-905 and Lys-911 each participate in a glycyl lysine isopeptide (Lys-Gly) (interchain with G-Cter in SUMO2) cross-link. Residue Ser-937 is modified to Phosphoserine. Residue Lys-953 forms a Glycyl lysine isopeptide (Lys-Gly) (interchain with G-Cter in SUMO2) linkage. Polar residues predominate over residues 958–976 (QERSIPPSENQNSQESNGE). Disordered regions lie at residues 958-982 (QERS…CLSS), 997-1048 (ATDS…KERS), 1121-1140 (EPSE…RRNS), and 1182-1218 (PTFQ…VPPS). Thr-1021 is subject to Phosphothreonine. Ser-1025, Ser-1026, and Ser-1031 each carry phosphoserine. The span at 1035–1045 (KNKRRKIKGKK) shows a compositional bias: basic residues. Position 1249 is a phosphoserine (Ser-1249). Positions 1252–1483 (ESTESFHEPS…EVSSTSEIGT (232 aa)) are disordered. Over residues 1255 to 1277 (ESFHEPSQELKFSVEQRNTRNRE) the composition is skewed to basic and acidic residues. Residue Lys-1265 forms a Glycyl lysine isopeptide (Lys-Gly) (interchain with G-Cter in SUMO2) linkage. Polar residues-rich tracts occupy residues 1278-1291 (NSPS…SSIN) and 1299-1312 (KGNS…SSFL). 3 positions are modified to phosphoserine: Ser-1279, Ser-1281, and Ser-1284. Residue Lys-1299 forms a Glycyl lysine isopeptide (Lys-Gly) (interchain with G-Cter in SUMO2) linkage. Ser-1302 carries the phosphoserine modification. Lys-1324 is covalently cross-linked (Glycyl lysine isopeptide (Lys-Gly) (interchain with G-Cter in SUMO2)). Ser-1328 carries the phosphoserine modification. A compositionally biased stretch (polar residues) spans 1333 to 1346 (PEQQAESTLTSAET). A compositionally biased stretch (basic residues) spans 1349 to 1362 (SKKKKKLRKKKSLR). Ser-1370 is subject to Phosphoserine. Thr-1372 bears the Phosphothreonine mark. Residues Lys-1380, Lys-1392, and Lys-1395 each participate in a glycyl lysine isopeptide (Lys-Gly) (interchain with G-Cter in SUMO2) cross-link. Basic and acidic residues-rich tracts occupy residues 1402 to 1416 (EDSR…VRDE) and 1444 to 1456 (GEEK…KKDI). Lys-1454 participates in a covalent cross-link: Glycyl lysine isopeptide (Lys-Gly) (interchain with G-Cter in SUMO2). The span at 1457–1481 (WNSTEQNPLETSRSGCDEVSSTSEI) shows a compositional bias: polar residues. Ser-1468 carries the post-translational modification Phosphoserine. Residues Lys-1486 and Lys-1504 each participate in a glycyl lysine isopeptide (Lys-Gly) (interchain with G-Cter in SUMO2) cross-link. A compositionally biased stretch (polar residues) spans 1502 to 1513 (SIKGSKNSSEIS). Residues 1502-1527 (SIKGSKNSSEISSEPGDDDEPTEGSF) are disordered. WD repeat units follow at residues 1529-1568 (GHQA…GVFE), 1570-1611 (HTSK…CVEQ), 1654-1695 (HGPR…LLRT), 1698-1737 (GHSK…RIYK), 1738-1775 (GHNH…RLQV), and 1778-1815 (GHKD…NYRC). Lys-1585 participates in a covalent cross-link: Glycyl lysine isopeptide (Lys-Gly) (interchain with G-Cter in SUMO2). Lys-1737 participates in a covalent cross-link: Glycyl lysine isopeptide (Lys-Gly) (interchain with G-Cter in SUMO2). The C2H2-type 2; atypical zinc finger occupies 1813 to 1838 (YRCWWHGCSLIFGVVDHLKQHLLTDH). Lys-1864 is covalently cross-linked (Glycyl lysine isopeptide (Lys-Gly) (interchain with G-Cter in SUMO2)).

Interacts with KNOP1. Interacts with TARDBP and NUP107. Interacts (via N-terminus) with RBM39. Interacts with the SH3 domains of FYN and GRB2. Phosphorylated by FYN in vitro.

The protein localises to the nucleus. The protein resides in the nucleolus. It is found in the nucleus speckle. RNA-binding protein. Specifically binds to 5'-GGGGCC-3' sequence repeats in RNA. Essential for maintenance of peripheral motor neuron and skeletal muscle function. Required for normal expression and/or alternative splicing of a number of genes in spinal cord and skeletal muscle, including the neurite outgrowth inhibitor RTN4. Also contributes to normal mitochondrial respiratory function in motor neurons, via an unknown mechanism. The chain is Zinc finger protein 106 (ZNF106) from Homo sapiens (Human).